We begin with the raw amino-acid sequence, 398 residues long: MVATAWANAREQVSLDPAVTNLNAGSCGPLPRPVFDRVTVRARMAAGPMDFLSRQLPPLLWTARERLAGYLGARPERLAFATNVTGAVNLVASSVQPHLAAGGEILLSDQEYAPMRWCWERVARHQGLVVRTFRLPVQPLGSPDEVVEAATAAMGPRTRLLFFSHVVSSTGLVLPATRLCEEARRRGVLTVVDGAQAPGFTDLDLAALPCDYYAGSGHKWLLAPTGVGFLHFAEDQGGVLRPPQVSWGYRPDGENPSDERNRFGSTDRLRNLECEGTRDLCPWLAVPSAIDFQAGLGHGRVRERMRELAAFTRERLSGWRGLEPVTPAHPGLSGAMTAFRLPPGTDTAGLRHGLWDRFRIDVPVLDRPDGPLLRVSTHFYNTETEVERLAEALKELSK.

K219 is modified (N6-(pyridoxal phosphate)lysine). Residues 243–264 form a disordered region; it reads PQVSWGYRPDGENPSDERNRFG. The span at 251–264 shows a compositional bias: basic and acidic residues; it reads PDGENPSDERNRFG.

The protein belongs to the class-V pyridoxal-phosphate-dependent aminotransferase family. Pyridoxal 5'-phosphate is required as a cofactor.

The catalysed reaction is isopenicillin N = penicillin N. It participates in antibiotic biosynthesis; cephalosporin C biosynthesis. Functionally, catalyzes the reversible isomerization between isopenicillin N and penicillin N. This is Isopenicillin N epimerase (cefD) from Amycolatopsis lactamdurans (Nocardia lactamdurans).